The primary structure comprises 180 residues: Protein SPMIP9 (180 aa).

Microtubule inner protein component of sperm flagellar doublet microtubules. In terms of tissue distribution, testis-specific. Detected in the germ cell lineage at all stages.

It is found in the nucleus. It localises to the cytoplasm. The protein localises to the cytoskeleton. Its subcellular location is the flagellum axoneme. Its function is as follows. Microtubule inner protein (MIP) part of the dynein-decorated doublet microtubules (DMTs) in flagella axoneme. This Homo sapiens (Human) protein is Protein SPMIP9.